The following is a 185-amino-acid chain: Elongation factor P (185 aa).

This sequence belongs to the elongation factor P family.

It localises to the cytoplasm. The protein operates within protein biosynthesis; polypeptide chain elongation. In terms of biological role, involved in peptide bond synthesis. Stimulates efficient translation and peptide-bond synthesis on native or reconstituted 70S ribosomes in vitro. Probably functions indirectly by altering the affinity of the ribosome for aminoacyl-tRNA, thus increasing their reactivity as acceptors for peptidyl transferase. This chain is Elongation factor P, found in Staphylococcus carnosus (strain TM300).